Reading from the N-terminus, the 297-residue chain is MPPRRYNPDDRRDALLERINLDIPAAVAQALREDLGGEVDAGNDITAQLLPADTQAHATVITREDGVFCGKRWVEEVFIQLAGDDVRLTWHVDDGDAIHANQTVFELNGPARVLLTGERTALNFVQTLSGVASEVRRYVGLLAGTQTQLLDTRKTLPGLRTALKYAVLCGGGANHRLGLTDAFLIKENHIIASGSVRQAVEKAFWLHPDVPVEVEVENLDELDDALKAGADIIMLDNFNTDQMREAVKRVNGQARLEVSGNVTAETLREFAETGVDFISVGALTKHVRALDLSMRFC.

Residue proline 2 is modified to Blocked amino end (Pro). Substrate is bound by residues arginine 119, 152–154 (TRK), arginine 176, lysine 186, glutamate 215, aspartate 236, 259–261 (SGN), and 280–282 (VGA).

It belongs to the NadC/ModD family. Hexamer formed by 3 homodimers. Homodimer.

It carries out the reaction nicotinate beta-D-ribonucleotide + CO2 + diphosphate = quinolinate + 5-phospho-alpha-D-ribose 1-diphosphate + 2 H(+). It functions in the pathway cofactor biosynthesis; NAD(+) biosynthesis; nicotinate D-ribonucleotide from quinolinate: step 1/1. Its function is as follows. Involved in the catabolism of quinolinic acid (QA). This chain is Nicotinate-nucleotide pyrophosphorylase [carboxylating] (nadC), found in Salmonella typhimurium (strain LT2 / SGSC1412 / ATCC 700720).